The following is a 145-amino-acid chain: LIRP (145 aa).

A signal peptide (or 22) is located at residues 1–19 (MWKLCLRLLAVLAVCLSTA). Propeptides lie at residues 20–33 (TQAQ…SPKR) and 117–122 (FRRRTR). 3 disulfides stabilise this stretch: Cys-44–Cys-129, Cys-56–Cys-142, and Cys-128–Cys-133.

Belongs to the insulin family. In terms of assembly, heterodimer of a B chain and an A chain linked by two disulfide bonds.

It localises to the secreted. This is LIRP from Locusta migratoria (Migratory locust).